Consider the following 301-residue polypeptide: (R)-2-haloacid dehalogenase (301 aa).

This sequence belongs to the HAD-like hydrolase superfamily. S-2-haloalkanoic acid dehalogenase family. In terms of assembly, homotetramer.

It catalyses the reaction an (R)-2-haloacid + H2O = a (2S)-2-hydroxycarboxylate + a halide anion + H(+). Catalyzes the hydrolytic dehalogenation of small (R)-2-haloalkanoic acids to yield the corresponding (S)-2-hydroxyalkanoic acids. Acts on acids of short chain lengths, C(2) to C(4), with inversion of configuration at C-2. The protein is (R)-2-haloacid dehalogenase (hadD) of Pseudomonas putida (Arthrobacter siderocapsulatus).